Here is a 199-residue protein sequence, read N- to C-terminus: Holliday junction branch migration complex subunit RuvA (199 aa).

The tract at residues 1–65 is domain I; it reads MIGWLHGQII…EDALLLYGFL (65 aa). The tract at residues 66-144 is domain II; sequence DKEERSLFRS…QFDGSVSDTF (79 aa). The segment at 144–148 is flexible linker; it reads FQKQA. The interval 149-199 is domain III; sequence GSTHSQQEAISALEALGYKPQEAWKVMNKIDNGNKSCEQLIREALQILSSR.

This sequence belongs to the RuvA family. Homotetramer. Forms an RuvA(8)-RuvB(12)-Holliday junction (HJ) complex. HJ DNA is sandwiched between 2 RuvA tetramers; dsDNA enters through RuvA and exits via RuvB. An RuvB hexamer assembles on each DNA strand where it exits the tetramer. Each RuvB hexamer is contacted by two RuvA subunits (via domain III) on 2 adjacent RuvB subunits; this complex drives branch migration. In the full resolvosome a probable DNA-RuvA(4)-RuvB(12)-RuvC(2) complex forms which resolves the HJ.

The protein resides in the cytoplasm. In terms of biological role, the RuvA-RuvB-RuvC complex processes Holliday junction (HJ) DNA during genetic recombination and DNA repair, while the RuvA-RuvB complex plays an important role in the rescue of blocked DNA replication forks via replication fork reversal (RFR). RuvA specifically binds to HJ cruciform DNA, conferring on it an open structure. The RuvB hexamer acts as an ATP-dependent pump, pulling dsDNA into and through the RuvAB complex. HJ branch migration allows RuvC to scan DNA until it finds its consensus sequence, where it cleaves and resolves the cruciform DNA. The sequence is that of Holliday junction branch migration complex subunit RuvA from Legionella pneumophila subsp. pneumophila (strain Philadelphia 1 / ATCC 33152 / DSM 7513).